The primary structure comprises 288 residues: Formamidopyrimidine-DNA glycosylase (288 aa).

P2 acts as the Schiff-base intermediate with DNA in catalysis. E3 (proton donor) is an active-site residue. The active-site Proton donor; for beta-elimination activity is the K58. The DNA site is built by H101, R124, and R169. The segment at 254–288 (LVYDRAGLPCRVCGTPIRQIVQGQRSTFYCPACQR) adopts an FPG-type zinc-finger fold. The Proton donor; for delta-elimination activity role is filled by R278.

It belongs to the FPG family. Monomer. Zn(2+) is required as a cofactor.

The enzyme catalyses Hydrolysis of DNA containing ring-opened 7-methylguanine residues, releasing 2,6-diamino-4-hydroxy-5-(N-methyl)formamidopyrimidine.. It catalyses the reaction 2'-deoxyribonucleotide-(2'-deoxyribose 5'-phosphate)-2'-deoxyribonucleotide-DNA = a 3'-end 2'-deoxyribonucleotide-(2,3-dehydro-2,3-deoxyribose 5'-phosphate)-DNA + a 5'-end 5'-phospho-2'-deoxyribonucleoside-DNA + H(+). Its function is as follows. Involved in base excision repair of DNA damaged by oxidation or by mutagenic agents. Acts as a DNA glycosylase that recognizes and removes damaged bases. Has a preference for oxidized purines, such as 7,8-dihydro-8-oxoguanine (8-oxoG). Has AP (apurinic/apyrimidinic) lyase activity and introduces nicks in the DNA strand. Cleaves the DNA backbone by beta-delta elimination to generate a single-strand break at the site of the removed base with both 3'- and 5'-phosphates. The sequence is that of Formamidopyrimidine-DNA glycosylase from Ralstonia nicotianae (strain ATCC BAA-1114 / GMI1000) (Ralstonia solanacearum).